Here is a 106-residue protein sequence, read N- to C-terminus: Somatoliberin (106 aa).

The N-terminal stretch at 1-19 (MLLWVFFLVTLTLSSGSHG) is a signal peptide. Positions 20-30 (SLPSQPLRIPR) are excised as a propeptide. The residue at position 74 (Leu74) is a Leucine amide. Positions 77 to 106 (QVDGVWTDQQQMALESTLVSLLQERRNSQG) are excised as a propeptide.

Belongs to the glucagon family.

Its subcellular location is the secreted. Functionally, GRF is released by the hypothalamus and acts on the adenohypophyse to stimulate the secretion of growth hormone. The protein is Somatoliberin (GHRH) of Bos taurus (Bovine).